The following is a 350-amino-acid chain: 2-oxoglutarate and iron-dependent oxygenase domain-containing protein 2 (350 aa).

A Fe2OG dioxygenase domain is found at 215 to 309 (DSHRAFVVKY…RWNLVVWLRA (95 aa)). The Fe cation site is built by histidine 235, aspartate 237, and histidine 290. 2-oxoglutarate is bound at residue arginine 300.

Belongs to the OGFOD2 family. Requires Fe(2+) as cofactor. L-ascorbate serves as cofactor.

This is 2-oxoglutarate and iron-dependent oxygenase domain-containing protein 2 (OGFOD2) from Homo sapiens (Human).